Consider the following 134-residue polypeptide: Ribonuclease VapC1 (134 aa).

One can recognise a PINc domain in the interval 4–123 (IIDTSIIIAL…LNVKDFKRIQ (120 aa)). Residues aspartate 6 and aspartate 97 each contribute to the Mg(2+) site.

The protein belongs to the PINc/VapC protein family. It depends on Mg(2+) as a cofactor.

Toxic component of a type II toxin-antitoxin (TA) system. Has ssRNase activity. Upon expression in E.coli inhibits growth in liquid culture; this toxic effect is neutralized by coexpression with cognate antitoxin VapB1. Its RNase activity is partially inhibited in vitro by VapB1. In Rickettsia felis (strain ATCC VR-1525 / URRWXCal2) (Rickettsia azadi), this protein is Ribonuclease VapC1.